The following is a 94-amino-acid chain: Protein RESPONSE TO LOW SULFUR 1 (94 aa).

Residues 8-35 (VTVAAEEMDELRRRNIELSREVAEMKTE) are a coiled coil.

The protein is Protein RESPONSE TO LOW SULFUR 1 of Arabidopsis thaliana (Mouse-ear cress).